Here is a 162-residue protein sequence, read N- to C-terminus: UPF0260 protein Caul_3920 (162 aa).

The protein belongs to the UPF0260 family.

The protein is UPF0260 protein Caul_3920 of Caulobacter sp. (strain K31).